The chain runs to 724 residues: Catalase-peroxidase (724 aa).

A disordered region spans residues 1–20 (MDENKTKPAGKCPVMHGGNT). The segment at residues 98 to 225 (WHSAGTYRTA…LAAVQMGLIY (128 aa)) is a cross-link (tryptophyl-tyrosyl-methioninium (Trp-Tyr) (with M-251)). The active-site Proton acceptor is His99. The tryptophyl-tyrosyl-methioninium (Tyr-Met) (with W-98) cross-link spans 225-251 (YVNPEGVDGNPDPLRTAQDMRVTFSRM). His266 contributes to the heme b binding site.

The protein belongs to the peroxidase family. Peroxidase/catalase subfamily. In terms of assembly, homodimer or homotetramer. Requires heme b as cofactor. Post-translationally, formation of the three residue Trp-Tyr-Met cross-link is important for the catalase, but not the peroxidase activity of the enzyme.

The catalysed reaction is H2O2 + AH2 = A + 2 H2O. It carries out the reaction 2 H2O2 = O2 + 2 H2O. In terms of biological role, bifunctional enzyme with both catalase and broad-spectrum peroxidase activity. The chain is Catalase-peroxidase from Pectobacterium carotovorum subsp. carotovorum (strain PC1).